Here is a 230-residue protein sequence, read N- to C-terminus: UPF0173 metal-dependent hydrolase SPO2976 (230 aa).

The protein belongs to the UPF0173 family.

The chain is UPF0173 metal-dependent hydrolase SPO2976 from Ruegeria pomeroyi (strain ATCC 700808 / DSM 15171 / DSS-3) (Silicibacter pomeroyi).